The following is a 224-amino-acid chain: CDP-diacylglycerol--inositol 3-phosphatidyltransferase (224 aa).

Topologically, residues 1-8 are cytoplasmic; that stretch reads MTIAEHDN. Residues 9–29 traverse the membrane as a helical segment; sequence VFIFVPNLIGYARIVLALIAF. Residues 30-35 lie on the Lumenal side of the membrane; it reads WFMSTN. Residues 36-52 form a helical membrane-spanning segment; it reads YVISGWCYVTSALLDAV. Aspartate 50 and aspartate 53 together coordinate Mg(2+). Topologically, residues 53 to 76 are cytoplasmic; the sequence is DGQAARAFNQSTRFGAMLDQLTDR. Positions 54, 58, and 64 each coordinate a CDP-1,2-diacyl-sn-glycerol. Residues aspartate 71 and aspartate 75 each contribute to the Mg(2+) site. Residue aspartate 75 is the Proton acceptor of the active site. The helical transmembrane segment at 77–97 threads the bilayer; that stretch reads CGTTGLLVTLAYFYPRYMFWF. Glutamine 98 is a topological domain (lumenal). A helical membrane pass occupies residues 99–119; the sequence is LSIAIDVACHWLFMQTSVVVG. Residues 120–138 are Cytoplasmic-facing; that stretch reads RSSHKVNDNFIMRLYYQKD. A helical transmembrane segment spans residues 139–159; it reads ILTFMCCVNELFYVCLYLLHF. Over 160–163 the chain is Lumenal; it reads TYGP. A helical membrane pass occupies residues 164-184; that stretch reads LIFGASLFKILAFLTGPFAVL. Over 185–224 the chain is Cytoplasmic; the sequence is KALISVMHAYVAGIDLAAVDVRERQERRQKSEPVSGKKVE.

It belongs to the CDP-alcohol phosphatidyltransferase class-I family. Mn(2+) is required as a cofactor. The cofactor is Mg(2+). As to expression, in adults, expression is higher in the head than in the body (at protein level).

It is found in the apical cell membrane. The protein localises to the lateral cell membrane. It catalyses the reaction a CDP-1,2-diacyl-sn-glycerol + myo-inositol = a 1,2-diacyl-sn-glycero-3-phospho-(1D-myo-inositol) + CMP + H(+). Its function is as follows. Catalyzes the biosynthesis of phosphatidylinositol (PtdIns) as well as PtdIns:inositol exchange reaction. May thus act to reduce an excessive cellular PtdIns content. The exchange activity is due to the reverse reaction of PtdIns synthase and is dependent on CMP, which is tightly bound to the enzyme. Required for the regeneration of the signaling molecule phosphatidylinositol 4,5-bisphosphate (PtdInsP2) from phosphatidic acid (PA) and maintenance of its steady supply during signaling, thus playing an essential role during phospholipase C-mediated transduction. This function is essential in photoreceptors for light-activated recycling of PtdInsP2 during phototransduction. As a key enzyme of the phosphoinositide pathway, indirectly involved in the polarized secretion of basal membrane (BM) proteins in follicle epithelial (FE) cells through promoting PtdInsP2 synthesis in the apical and lateral plasma membranes of FE cells. PtdInsP2 controls the localization of Crag and perhaps the localization and expression of strat, both of which are essential for restricting the secretion of BM proteins to the basal surface. This chain is CDP-diacylglycerol--inositol 3-phosphatidyltransferase, found in Drosophila melanogaster (Fruit fly).